Reading from the N-terminus, the 312-residue chain is L-lactate dehydrogenase (312 aa).

Positions 14, 35, and 66 each coordinate NAD(+). Substrate is bound by residues Q83, R90, and 122–125 (NPVD). Residues 120–122 (ASN) and S145 each bind NAD(+). A substrate-binding site is contributed by 150–153 (DSAR). H177 (proton acceptor) is an active-site residue. Y220 is subject to Phosphotyrosine. Residue T229 coordinates substrate.

Belongs to the LDH/MDH superfamily. LDH family. In terms of assembly, homotetramer.

The protein resides in the cytoplasm. It carries out the reaction (S)-lactate + NAD(+) = pyruvate + NADH + H(+). Its pathway is fermentation; pyruvate fermentation to lactate; (S)-lactate from pyruvate: step 1/1. In terms of biological role, catalyzes the conversion of lactate to pyruvate. In Mycoplasma pneumoniae (strain ATCC 29342 / M129 / Subtype 1) (Mycoplasmoides pneumoniae), this protein is L-lactate dehydrogenase.